A 203-amino-acid polypeptide reads, in one-letter code: Imidazole glycerol phosphate synthase subunit HisH 1 (203 aa).

The Glutamine amidotransferase type-1 domain occupies 1 to 203 (MIAIIDYNAG…KMIENFVELI (203 aa)). Cys-82 (nucleophile) is an active-site residue. Active-site residues include His-184 and Glu-186.

In terms of assembly, heterodimer of HisH and HisF.

It is found in the cytoplasm. It catalyses the reaction 5-[(5-phospho-1-deoxy-D-ribulos-1-ylimino)methylamino]-1-(5-phospho-beta-D-ribosyl)imidazole-4-carboxamide + L-glutamine = D-erythro-1-(imidazol-4-yl)glycerol 3-phosphate + 5-amino-1-(5-phospho-beta-D-ribosyl)imidazole-4-carboxamide + L-glutamate + H(+). The enzyme catalyses L-glutamine + H2O = L-glutamate + NH4(+). Its pathway is amino-acid biosynthesis; L-histidine biosynthesis; L-histidine from 5-phospho-alpha-D-ribose 1-diphosphate: step 5/9. Functionally, IGPS catalyzes the conversion of PRFAR and glutamine to IGP, AICAR and glutamate. The HisH subunit provides the glutamine amidotransferase activity that produces the ammonia necessary to HisF for the synthesis of IGP and AICAR. This is Imidazole glycerol phosphate synthase subunit HisH 1 (hisH1) from Methanococcus maripaludis (strain DSM 14266 / JCM 13030 / NBRC 101832 / S2 / LL).